The sequence spans 601 residues: Deuterosome assembly protein 1 (601 aa).

Coiled coils occupy residues 14 to 59, 86 to 197, and 226 to 278; these read CEAE…NAQT, TQNY…KQQR, and IEKL…LQSR. Disordered regions lie at residues 115–135 and 188–213; these read MKQN…PFEL and QTQL…CESS. Residues 121–131 show a composition bias toward basic and acidic residues; it reads HRKEASNKDET. Residues 307–326 are disordered; it reads DNRKRVESSYSPSTKEPERK. Residues 340–397 adopt a coiled-coil conformation; sequence HEKELNKMRSQLYQEEDLCSEQERMRNEISELTQELHQKEVTIATIMKKAALLERQLK. A Phosphoserine modification is found at Ser-544. A coiled-coil region spans residues 555–586; it reads AAQHFLMEEEKRAKELEKLLNTHIDELQRHTE.

It belongs to the CEP63 family. In terms of assembly, interacts with CEP152; the interaction is mutually exclusive with CEP63.

It is found in the cytoplasm. In terms of biological role, key structural component of the deuterosome, a structure that promotes de novo centriole amplification in multiciliated cells. Deuterosome-mediated centriole amplification occurs in terminally differentiated multiciliated cells and can generate more than 100 centrioles. Probably sufficient for the specification and formation of the deuterosome inner core. Interacts with CEP152 and recruits PLK4 to activate centriole biogenesis. The polypeptide is Deuterosome assembly protein 1 (Rattus norvegicus (Rat)).